The chain runs to 297 residues: Zinc finger protein 784 (297 aa).

A compositionally biased stretch (pro residues) spans 1 to 12 (MAAARPDPPIPS). The tract at residues 1-39 (MAAARPDPPIPSSPTRESPSPEPPDLVLVPDGRPVTPPG) is disordered. Residue Ser13 is modified to Phosphoserine. C2H2-type zinc fingers lie at residues 64-86 (FHCA…EHGH), 100-122 (SRCH…YSLH), and 128-150 (YRCS…QHRH). The tract at residues 149–175 (RHGVEPGTSERLLPTTTTGQPNSRVAQ) is disordered. A compositionally biased stretch (polar residues) spans 162 to 173 (PTTTTGQPNSRV). 3 C2H2-type zinc fingers span residues 195 to 217 (FACR…ERVH), 223 to 245 (YHCS…ARIH), and 251 to 273 (FRCM…QRTH). Residues 268–297 (KHQRTHFHGPGSGVGESRGQLRSSSVSQES) form a disordered region. Over residues 287–297 (QLRSSSVSQES) the composition is skewed to polar residues.

It belongs to the krueppel C2H2-type zinc-finger protein family.

It is found in the nucleus. In terms of biological role, may be involved in transcriptional regulation. The protein is Zinc finger protein 784 (Znf784) of Mus musculus (Mouse).